Consider the following 513-residue polypeptide: Probable histone deacetylase 19 (513 aa).

The interval 23 to 334 (RRVCYFYDPD…WCYETGVALG (312 aa)) is histone deacetylase. Histidine 154 serves as the catalytic Proton donor/acceptor. Positions 189, 191, and 277 each coordinate Zn(2+). Disordered stretches follow at residues 384-432 (HAPS…ESSR) and 446-513 (ENAT…YHKP). A compositionally biased stretch (acidic residues) spans 398–409 (EIPEQDEDQDDP). Residues 410–432 (DERHDPDSDMEVDDHKAVEESSR) show a composition bias toward basic and acidic residues. The span at 492 to 504 (NVKNEPESSTKLQ) shows a compositional bias: polar residues.

The protein belongs to the histone deacetylase family. HD type 1 subfamily. Zn(2+) is required as a cofactor.

The protein resides in the nucleus. The catalysed reaction is N(6)-acetyl-L-lysyl-[histone] + H2O = L-lysyl-[histone] + acetate. Functionally, responsible for the deacetylation of lysine residues on the N-terminal part of the core histones (H2A, H2B, H3 and H4). Histone deacetylation gives a tag for epigenetic repression and plays an important role in transcriptional regulation, cell cycle progression and developmental events. Histone deacetylases act via the formation of large multiprotein complexes. This chain is Probable histone deacetylase 19, found in Zea mays (Maize).